We begin with the raw amino-acid sequence, 84 residues long: Small ribosomal subunit protein uS17 (84 aa).

It belongs to the universal ribosomal protein uS17 family. As to quaternary structure, part of the 30S ribosomal subunit.

In terms of biological role, one of the primary rRNA binding proteins, it binds specifically to the 5'-end of 16S ribosomal RNA. The protein is Small ribosomal subunit protein uS17 of Thermoanaerobacter pseudethanolicus (strain ATCC 33223 / 39E) (Clostridium thermohydrosulfuricum).